The sequence spans 259 residues: Probable dihydroorotate dehydrogenase B (NAD(+)), electron transfer subunit (259 aa).

Residues 1–89 (MLPLNVTITQ…RGPFGKGFTL (89 aa)) enclose the FAD-binding FR-type domain. Residues Cys211, Cys216, Cys219, and Cys229 each contribute to the [2Fe-2S] cluster site.

This sequence belongs to the PyrK family. In terms of assembly, heterotetramer of 2 PyrK and 2 PyrD type B subunits. The cofactor is [2Fe-2S] cluster. It depends on FAD as a cofactor.

It functions in the pathway pyrimidine metabolism; UMP biosynthesis via de novo pathway; orotate from (S)-dihydroorotate (NAD(+) route): step 1/1. Functionally, responsible for channeling the electrons from the oxidation of dihydroorotate from the FMN redox center in the PyrD type B subunit to the ultimate electron acceptor NAD(+). This chain is Probable dihydroorotate dehydrogenase B (NAD(+)), electron transfer subunit, found in Methanosarcina acetivorans (strain ATCC 35395 / DSM 2834 / JCM 12185 / C2A).